We begin with the raw amino-acid sequence, 67 residues long: Large ribosomal subunit protein bL35 (67 aa).

A disordered region spans residues 22–52; that stretch reads VLAGPGKKRHNLSARSQKAKRQNRGSQVLTH. Residues 27 to 44 show a composition bias toward basic residues; that stretch reads GKKRHNLSARSQKAKRQN.

This sequence belongs to the bacterial ribosomal protein bL35 family.

The chain is Large ribosomal subunit protein bL35 from Granulibacter bethesdensis (strain ATCC BAA-1260 / CGDNIH1).